Here is a 343-residue protein sequence, read N- to C-terminus: Dihydroorotase (343 aa).

Residues histidine 13 and histidine 15 each contribute to the Zn(2+) site. Substrate-binding positions include 15–17 and asparagine 41; that span reads HLR. Lysine 99, histidine 136, and histidine 174 together coordinate Zn(2+). Lysine 99 carries the post-translational modification N6-carboxylysine. Histidine 136 is a substrate binding site. Leucine 219 is a binding site for substrate. Position 247 (aspartate 247) interacts with Zn(2+). The active site involves aspartate 247. Residues histidine 251 and alanine 263 each contribute to the substrate site.

The protein belongs to the metallo-dependent hydrolases superfamily. DHOase family. Class II DHOase subfamily. In terms of assembly, homodimer. Requires Zn(2+) as cofactor.

The catalysed reaction is (S)-dihydroorotate + H2O = N-carbamoyl-L-aspartate + H(+). The protein operates within pyrimidine metabolism; UMP biosynthesis via de novo pathway; (S)-dihydroorotate from bicarbonate: step 3/3. In terms of biological role, catalyzes the reversible cyclization of carbamoyl aspartate to dihydroorotate. This is Dihydroorotase from Shewanella baltica (strain OS155 / ATCC BAA-1091).